Here is a 421-residue protein sequence, read N- to C-terminus: UDP-N-acetylglucosamine 1-carboxyvinyltransferase (421 aa).

22-23 serves as a coordination point for phosphoenolpyruvate; sequence KN. Arg94 provides a ligand contact to UDP-N-acetyl-alpha-D-glucosamine. Cys118 (proton donor) is an active-site residue. Cys118 bears the 2-(S-cysteinyl)pyruvic acid O-phosphothioketal mark. UDP-N-acetyl-alpha-D-glucosamine contacts are provided by residues 123–127, Asp308, and Ile330; that span reads RPMDL.

It belongs to the EPSP synthase family. MurA subfamily.

The protein resides in the cytoplasm. The enzyme catalyses phosphoenolpyruvate + UDP-N-acetyl-alpha-D-glucosamine = UDP-N-acetyl-3-O-(1-carboxyvinyl)-alpha-D-glucosamine + phosphate. The protein operates within cell wall biogenesis; peptidoglycan biosynthesis. In terms of biological role, cell wall formation. Adds enolpyruvyl to UDP-N-acetylglucosamine. The chain is UDP-N-acetylglucosamine 1-carboxyvinyltransferase from Ruegeria pomeroyi (strain ATCC 700808 / DSM 15171 / DSS-3) (Silicibacter pomeroyi).